Here is a 329-residue protein sequence, read N- to C-terminus: MATRPQPLGMEPEGSADLLHGPEGARGQYGSTQKIEDLMDMVKKLQKVGSLEPRIEVLINRINEVQQAKKKASEELGEAQTVWDNLQKELDLLREEKVRLKDILNRKEETLRIMQLHCQEKESEAQRKHSMLQECKERISFLNSQIDKEKAKLRKLRLDFEEHLETLMSQHKDTLEFHKPEHLTKEMCVLDSSKEQLLKEEKLMKVKLEDVRQRLCALGGPEGSSSLIEGLFLRSHEAAAAMQMFKDENKKAEEFLEAAAQQHEQLQQRCHQLQQKRQRLKEELEKHGVQILAHSTQNEEDSSWRMASPKPVEVHEETAQDQERPSSRT.

Residues 1 to 29 (MATRPQPLGMEPEGSADLLHGPEGARGQY) are disordered. Coiled coils occupy residues 54–167 (RIEV…LETL) and 194–294 (KEQL…ILAH). Residues 291 to 329 (ILAHSTQNEEDSSWRMASPKPVEVHEETAQDQERPSSRT) are disordered. The segment covering 312–329 (VEVHEETAQDQERPSSRT) has biased composition (basic and acidic residues).

Belongs to the SYCE family. In terms of assembly, homodimer. Found in a complex with SYCP1 and SYCE2. Interacts with SYCP1, SYCE2 and SYCE3. Interacts with SIX6OS1. Meiotic cells (at protein level). Expressed in the ovary and testis.

It is found in the nucleus. The protein resides in the chromosome. Its function is as follows. Major component of the transverse central element of synaptonemal complexes (SCS), formed between homologous chromosomes during meiotic prophase. Requires SYCP1 in order to be incorporated into the central element. May have a role in the synaptonemal complex assembly, stabilization and recombination. This Mus musculus (Mouse) protein is Synaptonemal complex central element protein 1 (Syce1).